Reading from the N-terminus, the 1146-residue chain is Cell division cycle and apoptosis regulator protein 1 (1146 aa).

An interaction with AR region spans residues 1-246; sequence MAQFGGQKNP…AQPQPQSLLQ (246 aa). Residues 200–657 form an interaction with GATA2 region; the sequence is QRIQTLPNQN…RALSSKGLKS (458 aa). The disordered stretch occupies residues 282 to 351; that stretch reads IVSQPQPARR…RRERERSPRR (70 aa). Basic and acidic residues-rich tracts occupy residues 290 to 331 and 338 to 349; these read RRLD…ERSP and ERSPRRERERSP. Ser-453 carries the post-translational modification Phosphoserine. The stretch at 591–615 forms a coiled coil; it reads KQQLVEKLQGERKKADGEQDEEEKD. The disordered stretch occupies residues 599-635; it reads QGERKKADGEQDEEEKDDGEVKEIATPTHWSKLDPKA. Positions 608 to 618 are enriched in acidic residues; the sequence is EQDEEEKDDGE. Phosphothreonine is present on Thr-624. The region spanning 633–667 is the SAP domain; that stretch reads PKAMKVNDLRKELESRALSSKGLKSQLIARLTKQL. Residue Lys-634 forms a Glycyl lysine isopeptide (Lys-Gly) (interchain with G-Cter in ubiquitin) linkage. The segment at 640–1146 is interaction with GATA1; it reads DLRKELESRA…EKSKENGSGV (507 aa). Residue Thr-664 is modified to Phosphothreonine. 4 stretches are compositionally biased toward basic and acidic residues: residues 671–684, 691–716, 793–814, and 829–852; these read EQKE…KSEK, DKKS…RQER, KEDK…KKEE, and SGDD…KDDS. 2 disordered regions span residues 671–716 and 793–912; these read EQKE…RQER and KEDK…KEKP. A phosphoserine mark is found at Ser-682 and Ser-694. Residues 853-884 show a composition bias toward acidic residues; sequence KDDDETEEDNNQDEYDPMEAEEAEDEDDDREE. A Phosphothreonine modification is found at Thr-858. Basic and acidic residues predominate over residues 885-912; sequence EEVKRDDKRDVSRYCKDRPAKDKEKEKP. Residue Lys-1008 forms a Glycyl lysine isopeptide (Lys-Gly) (interchain with G-Cter in SUMO1); alternate linkage. A Glycyl lysine isopeptide (Lys-Gly) (interchain with G-Cter in SUMO2); alternate cross-link involves residue Lys-1008. Residues 1029–1110 are a coiled coil; the sequence is DVGSLLQKLE…LQFENQLNKT (82 aa). Residues Lys-1063 and Lys-1131 each participate in a glycyl lysine isopeptide (Lys-Gly) (interchain with G-Cter in SUMO2) cross-link.

In terms of assembly, directly interacts with ESR1, NR3C1 and p53/TP53. Interacts (via N-terminus) with CALCOCO1. Interacts with MED1 and GATA1. Interacts with AR and GATA2.

The protein localises to the cytoplasm. Its subcellular location is the perinuclear region. Associates with components of the Mediator and p160 coactivator complexes that play a role as intermediaries transducing regulatory signals from upstream transcriptional activator proteins to basal transcription machinery at the core promoter. Recruited to endogenous nuclear receptor target genes in response to the appropriate hormone. Also functions as a p53 coactivator. May thus play an important role in transcriptional regulation. May be involved in apoptosis signaling in the presence of the retinoid CD437. Apoptosis induction involves sequestration of 14-3-3 protein(s) and mediated altered expression of multiple cell cycle regulatory genes including MYC, CCNB1 and CDKN1A. Plays a role in cell cycle progression and/or cell proliferation. In association with CALCOCO1 enhances GATA1- and MED1-mediated transcriptional activation from the gamma-globin promoter during erythroid differentiation of K562 erythroleukemia cells. Can act as a both a coactivator and corepressor of AR-mediated transcription. Contributes to chromatin looping and AR transcription complex assembly by stabilizing AR-GATA2 association on chromatin and facilitating MED1 and RNA polymerase II recruitment to AR-binding sites. May play an important role in the growth and tumorigenesis of prostate cancer cells. This Mus musculus (Mouse) protein is Cell division cycle and apoptosis regulator protein 1 (Ccar1).